Reading from the N-terminus, the 216-residue chain is Glycerol-3-phosphate acyltransferase 3 (216 aa).

The next 5 membrane-spanning stretches (helical) occupy residues 6–26 (LLLVVIVSYLLGSIPFGYLVS), 58–78 (LVAALDVVKGVSAVAFAGLVI), 92–112 (ILFAQVLAGLAAVAGHIWPVF), 125–145 (FGGMIALCPVAAIFGGEVLII), and 158–178 (ITGVVGAYALLIPLTFISGFP).

It belongs to the PlsY family. As to quaternary structure, probably interacts with PlsX.

It is found in the cell membrane. The enzyme catalyses an acyl phosphate + sn-glycerol 3-phosphate = a 1-acyl-sn-glycero-3-phosphate + phosphate. It functions in the pathway lipid metabolism; phospholipid metabolism. Catalyzes the transfer of an acyl group from acyl-phosphate (acyl-PO(4)) to glycerol-3-phosphate (G3P) to form lysophosphatidic acid (LPA). This enzyme utilizes acyl-phosphate as fatty acyl donor, but not acyl-CoA or acyl-ACP. This chain is Glycerol-3-phosphate acyltransferase 3, found in Dehalococcoides mccartyi (strain ATCC BAA-2266 / KCTC 15142 / 195) (Dehalococcoides ethenogenes (strain 195)).